We begin with the raw amino-acid sequence, 423 residues long: MEDDCDIIIIGAGIAGTACALRCARAGLSVLLLERAEIPGSKNLSGGRLYTHALAELLPQFHLTAPLERRITHESLSLLTPDGVTTFSSLQPGGESWSVLRARFDPWLVAEAEKEGVECIPGATVDALYEENGRVCGVICGDDILRARYVVLAEGANSVLAERHGLVTRPAGEAMALGIKEVLSLETSAIEERFHLENNEGAALLFSGRICDDLPGGAFLYTNQQTLSLGIVCPLSSLTQSRVPASELLTRFKAHPAVRPLIKNTESLEYGAHLVPEGGLHSMPVQYAGNGWLLVGDALRSCVNTGISVRGMDMALTGAQAAAQTLISACQHREPQNLFPLYHHNVERSLLWDVLQRYQHVPALLQRPGWYRTWPALMQDISRDLWDQGDKPVPPLRQLFWHHLRRHGLWHLAGDVIRSLRCL.

Residue 7–21 (IIIIGAGIAGTACAL) participates in FAD binding.

Belongs to the ETF-QO/FixC family. It depends on FAD as a cofactor.

Its function is as follows. Probably accepts electrons from YgcQ/YgcR and reduces a quinone. The chain is Probable electron transfer flavoprotein-quinone oxidoreductase YgcN (ygcN) from Escherichia coli (strain K12).